A 794-amino-acid polypeptide reads, in one-letter code: Ent-copalyl diphosphate synthase 2 (794 aa).

Residues 1-35 (MSSSSNVTSLPRLTTAGGVFPREMVRVHSSCNILR) constitute a chloroplast transit peptide. Substrate is bound at residue lysine 238. 2 residues coordinate Mg(2+): aspartate 369 and aspartate 371. The DXDD motif signature appears at 369-372 (DVDD). Lysine 455 serves as a coordination point for substrate.

This sequence belongs to the terpene synthase family. Tpsc subfamily. It depends on Mg(2+) as a cofactor. In terms of tissue distribution, expressed in leaves.

It is found in the plastid. Its subcellular location is the chloroplast. The enzyme catalyses (2E,6E,10E)-geranylgeranyl diphosphate = ent-copalyl diphosphate. Its pathway is secondary metabolite biosynthesis; terpenoid biosynthesis. In terms of biological role, involved in the biosynthesis of ent-kaurene diterpenoids natural products such as oridonin, miltiradiene, eriocalyxin B and nezukol, known to exhibit antitumor, anti-inflammatory and antibacterial activities. Catalyzes the conversion of (2E,6E,10E)-geranylgeranyl diphosphate (GGPP) to ent-copalyl diphosphate (ent-CPP). The protein is Ent-copalyl diphosphate synthase 2 of Isodon eriocalyx (Plectranthus eriocalyx).